We begin with the raw amino-acid sequence, 2182 residues long: Autophagy-related protein 2 (2182 aa).

6 disordered regions span residues 291 to 375 (SPSL…PLAD), 392 to 426 (EQDY…ATPR), 523 to 630 (YTHE…STTL), 663 to 682 (DIDP…VATP), 736 to 758 (GAFS…SSVE), and 793 to 816 (DKKP…SKET). Composition is skewed to polar residues over residues 303–313 (NPPSRQATELS) and 322–331 (VSSSQASIRS). Residues 332-347 (NEPESASHHSLPENDH) show a composition bias toward basic and acidic residues. Acidic residues-rich tracts occupy residues 528 to 540 (AENE…EQTT) and 613 to 624 (WDDDYDDPEEEP). The segment covering 745 to 758 (HAQQRSSQGTSSVE) has biased composition (polar residues). Basic and acidic residues predominate over residues 793-813 (DKKPSPAEGSKQDTASKDAPS).

This sequence belongs to the ATG2 family. Interacts with ATG18.

It is found in the preautophagosomal structure membrane. The protein localises to the endoplasmic reticulum membrane. It carries out the reaction a 1,2-diacyl-sn-glycero-3-phosphocholine(in) = a 1,2-diacyl-sn-glycero-3-phosphocholine(out). It catalyses the reaction a 1,2-diacyl-sn-glycero-3-phospho-L-serine(in) = a 1,2-diacyl-sn-glycero-3-phospho-L-serine(out). The catalysed reaction is a 1,2-diacyl-sn-glycero-3-phosphoethanolamine(in) = a 1,2-diacyl-sn-glycero-3-phosphoethanolamine(out). Its function is as follows. Lipid transfer protein required for autophagosome completion and peroxisome degradation and peroxisome degradation. Tethers the edge of the isolation membrane (IM) to the endoplasmic reticulum (ER) and mediates direct lipid transfer from ER to IM for IM expansion. ATG2 binds to the ER exit site (ERES), which is the membrane source for autophagosome formation, using basic residues in its N-terminal region (NR) and to the expanding edge of the IM through its C-terminal region. The latter binding is assisted by an ATG18-PtdIns3P interaction. ATG2 then extracts phospholipids from the membrane source using its NR and transfers them to ATG9 to the IM through its predicted beta-sheet-rich structure for membrane expansion. Autophagy is required for proper vegetative growth, asexual/sexual reproduction, and full virulence. Autophagy is particularly involved in the biosynthesis of deoxynivalenol (DON), an important virulence determinant. The sequence is that of Autophagy-related protein 2 from Gibberella zeae (strain ATCC MYA-4620 / CBS 123657 / FGSC 9075 / NRRL 31084 / PH-1) (Wheat head blight fungus).